Reading from the N-terminus, the 189-residue chain is MKTGKELKPGTVIRLENDPWLVQKAEFTKSGRNSAIMKTKLKNLLTGYKTEIVYSADDKLDDVILDRKEATLSFISGDTYTFMDTTDYTMYELNAEDIESVLPFVEEGMTDVCEAVFFDERLVSVELPTTIVRQVDYTEGSARGDTSGKVMKPAKLKNGTELSVADFIEIGDMIEIDTREGGSYKGRAK.

It belongs to the elongation factor P family.

Its subcellular location is the cytoplasm. The protein operates within protein biosynthesis; polypeptide chain elongation. Its function is as follows. Involved in peptide bond synthesis. Stimulates efficient translation and peptide-bond synthesis on native or reconstituted 70S ribosomes in vitro. Probably functions indirectly by altering the affinity of the ribosome for aminoacyl-tRNA, thus increasing their reactivity as acceptors for peptidyl transferase. This is Elongation factor P from Pseudomonas syringae pv. tomato (strain ATCC BAA-871 / DC3000).